Consider the following 186-residue polypeptide: MPVKSDRWIRRMALEHGMIEPFVDHQVRKGVISYGLTSYGYDMRVTNHFKVFTNVYNALVDPKKFDPRSFVDIEADYVDIPPNSFALAQSLEYFRIPRTVSCIVIGKSSYARCGIIINVTPLEPEWEGHVTIEISNTTPLPARIYAHEGIGQVLFLESDEPCEVSYADKKGKYQGQTGIVLPRIDP.

Position 107–112 (107–112 (KSSYAR)) interacts with dCTP. E133 serves as the catalytic Proton donor/acceptor. Positions 152, 166, and 176 each coordinate dCTP.

Belongs to the dCTP deaminase family. Homotrimer.

The catalysed reaction is dCTP + H2O + H(+) = dUTP + NH4(+). It functions in the pathway pyrimidine metabolism; dUMP biosynthesis; dUMP from dCTP (dUTP route): step 1/2. Functionally, catalyzes the deamination of dCTP to dUTP. The chain is dCTP deaminase from Chloroflexus aggregans (strain MD-66 / DSM 9485).